Reading from the N-terminus, the 285-residue chain is Probable enoyl-CoA hydratase echA12 (285 aa).

This sequence belongs to the enoyl-CoA hydratase/isomerase family.

It carries out the reaction a (3S)-3-hydroxyacyl-CoA = a (2E)-enoyl-CoA + H2O. It catalyses the reaction a 4-saturated-(3S)-3-hydroxyacyl-CoA = a (3E)-enoyl-CoA + H2O. Could possibly oxidize fatty acids using specific components. The sequence is that of Probable enoyl-CoA hydratase echA12 (echA12) from Mycobacterium bovis (strain ATCC BAA-935 / AF2122/97).